The chain runs to 83 residues: Small ribosomal subunit protein bS16 (83 aa).

The protein belongs to the bacterial ribosomal protein bS16 family.

The polypeptide is Small ribosomal subunit protein bS16 (Azoarcus sp. (strain BH72)).